A 315-amino-acid polypeptide reads, in one-letter code: Methionyl-tRNA formyltransferase (315 aa).

113-116 is a (6S)-5,6,7,8-tetrahydrofolate binding site; that stretch reads SLLP.

The protein belongs to the Fmt family.

It catalyses the reaction L-methionyl-tRNA(fMet) + (6R)-10-formyltetrahydrofolate = N-formyl-L-methionyl-tRNA(fMet) + (6S)-5,6,7,8-tetrahydrofolate + H(+). Functionally, attaches a formyl group to the free amino group of methionyl-tRNA(fMet). The formyl group appears to play a dual role in the initiator identity of N-formylmethionyl-tRNA by promoting its recognition by IF2 and preventing the misappropriation of this tRNA by the elongation apparatus. The sequence is that of Methionyl-tRNA formyltransferase from Pectobacterium atrosepticum (strain SCRI 1043 / ATCC BAA-672) (Erwinia carotovora subsp. atroseptica).